Reading from the N-terminus, the 131-residue chain is uncharacterized protein (131 aa).

The protein localises to the plastid. It localises to the chloroplast. This is an uncharacterized protein from Chlorella vulgaris (Green alga).